The chain runs to 79 residues: Probable 26S proteasome complex subunit sem1 (79 aa).

Residues 1-21 (MSAPDKEKEKEKEETNNKSED) show a composition bias toward basic and acidic residues. The interval 1 to 30 (MSAPDKEKEKEKEETNNKSEDLGLLEEDDE) is disordered. Phosphoserine is present on serine 19.

The protein belongs to the DSS1/SEM1 family. Part of the 26S proteasome.

Its function is as follows. Subunit of the 26S proteasome which plays a role in ubiquitin-dependent proteolysis. The protein is Probable 26S proteasome complex subunit sem1 of Drosophila melanogaster (Fruit fly).